The chain runs to 309 residues: MIVSAQQNPDVFTALRGRVTHAAPLAPQTWFRVGGQAETLFRPADTDDLCTLQRRVSNLVPMTIIGAASNLIIRDGGLPGITVKLGRGFNEITTDGDGMIAGAAALDATVAEHAAQAGLAGLEFLCGIPGTIGGAIAMNAGAYGSDIASVLDWVELALDGDIARLEASRLSLSYRHAALPPGCAVVRARLRTRPGNTADIIARMQDIRAARDAAQPVRARTGGSTFRNPDGQKAWELIDAAGCRGLSRGGAQVSEKHCNFLLNTGEATAADLEALGEEIRQRVQASCGTTLHWEIKRIGIPFHHPECQS.

Residues 33–195 (VGGQAETLFR…VRARLRTRPG (163 aa)) form the FAD-binding PCMH-type domain. The active site involves Arg175. Catalysis depends on Ser224, which acts as the Proton donor. Glu294 is an active-site residue.

Belongs to the MurB family. Requires FAD as cofactor.

It is found in the cytoplasm. The enzyme catalyses UDP-N-acetyl-alpha-D-muramate + NADP(+) = UDP-N-acetyl-3-O-(1-carboxyvinyl)-alpha-D-glucosamine + NADPH + H(+). It functions in the pathway cell wall biogenesis; peptidoglycan biosynthesis. Functionally, cell wall formation. The chain is UDP-N-acetylenolpyruvoylglucosamine reductase from Granulibacter bethesdensis (strain ATCC BAA-1260 / CGDNIH1).